A 412-amino-acid chain; its full sequence is Serine hydroxymethyltransferase (412 aa).

(6S)-5,6,7,8-tetrahydrofolate is bound by residues Leu-120 and 124–126 (GHL). Lys-229 carries the N6-(pyridoxal phosphate)lysine modification. Position 352–354 (352–354 (SPF)) interacts with (6S)-5,6,7,8-tetrahydrofolate.

It belongs to the SHMT family. As to quaternary structure, homodimer. It depends on pyridoxal 5'-phosphate as a cofactor.

It is found in the cytoplasm. The enzyme catalyses (6R)-5,10-methylene-5,6,7,8-tetrahydrofolate + glycine + H2O = (6S)-5,6,7,8-tetrahydrofolate + L-serine. It functions in the pathway one-carbon metabolism; tetrahydrofolate interconversion. Its pathway is amino-acid biosynthesis; glycine biosynthesis; glycine from L-serine: step 1/1. Its function is as follows. Catalyzes the reversible interconversion of serine and glycine with tetrahydrofolate (THF) serving as the one-carbon carrier. This reaction serves as the major source of one-carbon groups required for the biosynthesis of purines, thymidylate, methionine, and other important biomolecules. Also exhibits THF-independent aldolase activity toward beta-hydroxyamino acids, producing glycine and aldehydes, via a retro-aldol mechanism. This Acetivibrio thermocellus (strain ATCC 27405 / DSM 1237 / JCM 9322 / NBRC 103400 / NCIMB 10682 / NRRL B-4536 / VPI 7372) (Clostridium thermocellum) protein is Serine hydroxymethyltransferase.